A 344-amino-acid polypeptide reads, in one-letter code: Serine proteinase inhibitor 2 (344 aa).

Belongs to the serpin family. Poxviruses subfamily.

Its subcellular location is the host cytoplasm. In terms of biological role, viral serpin that inhibits both cysteine and serine proteinases involved in the regulation of host inflammatory and apoptosis processes. Major anti-apoptotic protein which inhibits both intrinsic and extrinsic pathways and strongly cleaves host CASP1 and CASP8 but is a rather poor inhibitor of host CASP3. Prevents the proteolytic activity of host interleukin-1-beta converting enzyme (ICE) and ICE-like enzymes. Can also block apoptosis through host tumor necrosis factor (TNF) receptor. The inhibition of host ICE is an example of a 'cross-class' interaction, in which a serpin inhibits a non-serine proteinase. Also inhibits granzyme B. In Cynomys gunnisoni (Gunnison's prairie dog), this protein is Serine proteinase inhibitor 2 (OPG199).